The following is a 263-amino-acid chain: Adaptin ear-binding coat-associated protein 2 (263 aa).

Disordered stretches follow at residues 166–194 (KKKE…PPGG) and 219–263 (APSS…WVQF). Residue Ser-181 is modified to Phosphoserine. 2 consecutive short sequence motifs (WXXF motif) follow at residues 240 to 243 (WGDF) and 260 to 263 (WVQF). A compositionally biased stretch (low complexity) spans 246 to 263 (STGSTSSQTQPGTGWVQF).

Belongs to the NECAP family. Interacts with AP1G1 and AP2A1 components of the adapter protein complexes AP-1 and AP-2. Interacts with the GAE domain proteins GGA1, GGA2 and GGA3.

The protein resides in the cytoplasmic vesicle. It is found in the clathrin-coated vesicle membrane. Its subcellular location is the cell membrane. Involved in endocytosis. This Homo sapiens (Human) protein is Adaptin ear-binding coat-associated protein 2 (NECAP2).